The following is an 829-amino-acid chain: Periplasmic nitrate reductase (829 aa).

Positions 1 to 30 form a signal peptide, tat-type signal; that stretch reads MKMTRRAFVKANAAASAAAVAGITLPASAA. The 4Fe-4S Mo/W bis-MGD-type domain maps to 41 to 97; the sequence is ITWDKAPCRFCGTGCSVLVGTQNGKVVATQGDPEAPVNKGLNCIKGYFLSKIMYGQD. 4 residues coordinate [4Fe-4S] cluster: Cys48, Cys51, Cys55, and Cys83. Residues Lys85, Gln152, Asn177, Cys181, 214–221, 245–249, 264–266, Met374, Gln378, Asn484, 510–511, Lys533, Asp560, and 718–727 each bind Mo-bis(molybdopterin guanine dinucleotide); these read WGSNMAEM, STYYH, QSD, SD, and TGRVLEHWHT. Residue Phe794 coordinates substrate. Residues Asn802 and Lys819 each coordinate Mo-bis(molybdopterin guanine dinucleotide).

It belongs to the prokaryotic molybdopterin-containing oxidoreductase family. NasA/NapA/NarB subfamily. Component of the periplasmic nitrate reductase NapAB complex composed of NapA and NapB. Requires [4Fe-4S] cluster as cofactor. The cofactor is Mo-bis(molybdopterin guanine dinucleotide). In terms of processing, predicted to be exported by the Tat system. The position of the signal peptide cleavage has not been experimentally proven.

The protein localises to the periplasm. The catalysed reaction is 2 Fe(II)-[cytochrome] + nitrate + 2 H(+) = 2 Fe(III)-[cytochrome] + nitrite + H2O. Catalytic subunit of the periplasmic nitrate reductase complex NapAB. Receives electrons from NapB and catalyzes the reduction of nitrate to nitrite. The chain is Periplasmic nitrate reductase from Vibrio vulnificus (strain YJ016).